The chain runs to 419 residues: Phospholipase A1-IIgamma (419 aa).

Coiled coils occupy residues Met-1–Lys-21 and Asn-207–Glu-227. Ser-236 serves as the catalytic Acyl-ester intermediate. Residues Ser-236, Asp-302, and His-339 each act as charge relay system in the active site.

The protein belongs to the AB hydrolase superfamily. Lipase family. As to expression, expressed in seedlings, stems and siliques, and, to a lower extent, in flowers.

It is found in the cytoplasm. Its function is as follows. Acylhydrolase that catalyzes the hydrolysis of 1,3-diacylglycerol (1,3-DAG) and 1-monoacylglycerol (1-MAG) at the sn-1 position. High activity toward 1,3-DAG and 1-MAG, but low activity toward 1,2-diacylglycerol (1,2-DAG) and 1-lysophosphatidylcholine (1-LPC), and no activity toward phosphatidylcholine (PC), monogalactosyldiacylglycerol (MGDG), digalactosyldiacylglycerol (DGDG), triacylglycerol (TAG) and 2-monoacylglycerol (2-MAG). May be involved in the negative regulation of seedling establishment by inhibiting the breakdown, beta-oxidation and mobilization of seed storage oils. The chain is Phospholipase A1-IIgamma (DSEL) from Arabidopsis thaliana (Mouse-ear cress).